We begin with the raw amino-acid sequence, 498 residues long: ADP,ATP carrier protein 1 (498 aa).

Over 1–33 (MSTSKSENYLSELRKIIWPIEQHENKKFLPLAF) the chain is Cytoplasmic. Residues 34–54 (MMFCILLNYSTLRSIKDGFVV) traverse the membrane as a helical segment. A disulfide bridge connects residues Cys-37 and Cys-85. The Extracellular segment spans residues 55–67 (TDIGTESISFLKT). A helical membrane pass occupies residues 68-88 (YIVLPSAVIAMVIYVKLCDIL). Topologically, residues 89 to 92 (KQEN) are cytoplasmic. Residues 93–113 (IFYVITSFFLGYFALFAFVLY) traverse the membrane as a helical segment. Residues 114-147 (PYPDLVHPDHKTIESLSLAYPNFKWFIKIVGKWS) lie on the Extracellular side of the membrane. Residues 148–168 (FASFYTIAELWGTMMLSLLFW) form a helical membrane-spanning segment. Over 169-184 (QFANQITKITEAKRFY) the chain is Cytoplasmic. A helical transmembrane segment spans residues 185 to 205 (SMFGLLANLALPVTSVVIGYF). The Extracellular segment spans residues 206 to 218 (LHEKTQIVSEHLK). A helical transmembrane segment spans residues 219 to 239 (FIPLFVIMITSSFLIILTYRW). The Cytoplasmic portion of the chain corresponds to 240–279 (MNKNVLTDPRLYDPTLVKEKKAKAKLSFIESFKMIFTSKY). Residues 280-300 (VGYIALLIIAYGVSVNLVEGV) traverse the membrane as a helical segment. Over 301–320 (WKSKVKELYPTKEAYTIYMG) the chain is Extracellular. A helical membrane pass occupies residues 321–341 (QFQFYQGWVAIAFMLIGSNIL). At 342–348 (RKVSWLT) the chain is on the cytoplasmic side. A helical transmembrane segment spans residues 349-369 (AAMITPLMMFITGAAFFSFIF). Residues 370–379 (FDSVIAMNLT) lie on the Extracellular side of the membrane. A helical membrane pass occupies residues 380–400 (GILASSPLTLAVMFGMIQNVL). The Cytoplasmic segment spans residues 401-438 (SKGVKYSLFDATKNMAYIPLDKDLRVKGQAAVEVIGGR). 436 to 442 (GGRLGKS) serves as a coordination point for ATP. A helical transmembrane segment spans residues 439–459 (LGKSGGAIIQSTFFILFPAFG). Residues 460–465 (FIEATP) lie on the Extracellular side of the membrane. A helical transmembrane segment spans residues 466-486 (YFASIFFIIVILWIFAVKGLN). Over 487-498 (KEYQVLVNKNEN) the chain is Cytoplasmic.

Belongs to the ADP/ATP translocase tlc family.

The protein resides in the cell membrane. Provides the rickettsial cell with host ATP in exchange for rickettsial ADP. This is an obligate exchange system. This energy acquiring activity is an important component of rickettsial parasitism. The chain is ADP,ATP carrier protein 1 (tlcA) from Rickettsia typhi (strain ATCC VR-144 / Wilmington).